The following is a 285-amino-acid chain: Golgi phosphoprotein 3-like (285 aa).

Positions 1 to 43 are disordered; it reads MTTLTHRTRRTEVSKSSEKKIESEEDTNQERSPDNEDPGDSKD. Over residues 10–43 the composition is skewed to basic and acidic residues; sequence RTEVSKSSEKKIESEEDTNQERSPDNEDPGDSKD. Residues tryptophan 67 and arginine 76 each coordinate a 1,2-diacyl-sn-glycero-3-phospho-(1D-myo-inositol 4-phosphate). Serine 112 carries the post-translational modification Phosphoserine. A 1,2-diacyl-sn-glycero-3-phospho-(1D-myo-inositol 4-phosphate) is bound by residues arginine 157 and arginine 160. The beta-hairpin required for oligomerization stretch occupies residues 176 to 187; it reads EKQNFLLFDMTT.

This sequence belongs to the GOLPH3/VPS74 family. In terms of assembly, homooligomer. Does not interact MYO18; differs from GOLPH3 by its inability to interact with MYO18. May interact with ARF1. In terms of tissue distribution, expressed in a subset of tissues tested with higher expression in salivary gland, small intestine and skin (at protein level).

The protein resides in the golgi apparatus. It localises to the golgi stack membrane. Its subcellular location is the trans-Golgi network membrane. Its function is as follows. Phosphatidylinositol-4-phosphate-binding protein that may antagonize the action of GOLPH3 which is required for the process of vesicle budding at the Golgi and anterograde transport to the plasma membrane. This is Golgi phosphoprotein 3-like (Golph3l) from Mus musculus (Mouse).